The primary structure comprises 164 residues: uncharacterized protein (164 aa).

The signal sequence occupies residues 1 to 22; sequence MKTNRSLVVIVSLITATLLLTA. The N-palmitoyl cysteine moiety is linked to residue cysteine 23. Cysteine 23 is lipidated: S-diacylglycerol cysteine.

The protein localises to the cell membrane. This is an uncharacterized protein from Escherichia coli (strain K12).